We begin with the raw amino-acid sequence, 476 residues long: MAQYSAEFKQAKVLVLGDVMLDRYWFGATNRISPEAPVPVVRVQENEERAGGAANVAMNIASLNVSVQLMGLIGQDETGSALSLLLEKQKIDCNFVALETHPTITKLRILSRHQQLLRLDFEEDFNNVDCKDLLAKLESAVKNYGALILSDYGKGTLKDVQKMIQIARKANVPVLIDPKGTDFERYRGATLLTPNMSEFEAVVGKCNTEEEIIKKGLKLISDIELTALLVTRSEKGMTLLRPNQEPYHLPTVAKEVFDVTGAGDTVISVLATALADGRSFEESCYLANVAAGIVVGKLGTSTVSTVELENAIHARPETGFGIMSEAELKDAVAQAKARGEKIVMTNGCFDILHPGHISYLENARKLGDRLIVAVNSDDSVKRLKGESRPINNLENRMAVLAGLASVDWLVPFTEDTPQRLIGEILPDLLVKGGDYKPEEIAGSKEVWANGGDVKVLNFENGCSTTNVIEKIKLLKD.

The segment at 1 to 318 (MAQYSAEFKQ…ENAIHARPET (318 aa)) is ribokinase. 195 to 198 (NMSE) contacts ATP. Residue aspartate 264 is part of the active site. The cytidylyltransferase stretch occupies residues 344 to 476 (MTNGCFDILH…VIEKIKLLKD (133 aa)).

This sequence in the N-terminal section; belongs to the carbohydrate kinase PfkB family. It in the C-terminal section; belongs to the cytidylyltransferase family. In terms of assembly, homodimer.

It carries out the reaction D-glycero-beta-D-manno-heptose 7-phosphate + ATP = D-glycero-beta-D-manno-heptose 1,7-bisphosphate + ADP + H(+). The enzyme catalyses D-glycero-beta-D-manno-heptose 1-phosphate + ATP + H(+) = ADP-D-glycero-beta-D-manno-heptose + diphosphate. It functions in the pathway nucleotide-sugar biosynthesis; ADP-L-glycero-beta-D-manno-heptose biosynthesis; ADP-L-glycero-beta-D-manno-heptose from D-glycero-beta-D-manno-heptose 7-phosphate: step 1/4. The protein operates within nucleotide-sugar biosynthesis; ADP-L-glycero-beta-D-manno-heptose biosynthesis; ADP-L-glycero-beta-D-manno-heptose from D-glycero-beta-D-manno-heptose 7-phosphate: step 3/4. Catalyzes the phosphorylation of D-glycero-D-manno-heptose 7-phosphate at the C-1 position to selectively form D-glycero-beta-D-manno-heptose-1,7-bisphosphate. Functionally, catalyzes the ADP transfer from ATP to D-glycero-beta-D-manno-heptose 1-phosphate, yielding ADP-D-glycero-beta-D-manno-heptose. This chain is Bifunctional protein HldE, found in Haemophilus influenzae (strain 86-028NP).